A 245-amino-acid chain; its full sequence is 1-(5-phosphoribosyl)-5-[(5-phosphoribosylamino)methylideneamino] imidazole-4-carboxamide isomerase (245 aa).

The active-site Proton acceptor is aspartate 7. Catalysis depends on aspartate 129, which acts as the Proton donor.

Belongs to the HisA/HisF family.

Its subcellular location is the cytoplasm. The enzyme catalyses 1-(5-phospho-beta-D-ribosyl)-5-[(5-phospho-beta-D-ribosylamino)methylideneamino]imidazole-4-carboxamide = 5-[(5-phospho-1-deoxy-D-ribulos-1-ylimino)methylamino]-1-(5-phospho-beta-D-ribosyl)imidazole-4-carboxamide. It participates in amino-acid biosynthesis; L-histidine biosynthesis; L-histidine from 5-phospho-alpha-D-ribose 1-diphosphate: step 4/9. This chain is 1-(5-phosphoribosyl)-5-[(5-phosphoribosylamino)methylideneamino] imidazole-4-carboxamide isomerase, found in Shewanella sp. (strain MR-4).